A 132-amino-acid polypeptide reads, in one-letter code: Small ribosomal subunit protein uS8 (132 aa).

Belongs to the universal ribosomal protein uS8 family. In terms of assembly, part of the 30S ribosomal subunit. Contacts proteins S5 and S12.

One of the primary rRNA binding proteins, it binds directly to 16S rRNA central domain where it helps coordinate assembly of the platform of the 30S subunit. This is Small ribosomal subunit protein uS8 from Borreliella afzelii (strain PKo) (Borrelia afzelii).